Consider the following 945-residue polypeptide: Isoleucine--tRNA ligase (945 aa).

Positions 66 to 76 (PYANGDIHLGH) match the 'HIGH' region motif. An L-isoleucyl-5'-AMP-binding site is contributed by Glu581. Positions 622–626 (KMSKS) match the 'KMSKS' region motif. Residue Lys625 participates in ATP binding. Zn(2+) contacts are provided by Cys908, Cys911, Cys928, and Cys931.

It belongs to the class-I aminoacyl-tRNA synthetase family. IleS type 1 subfamily. Monomer. Zn(2+) serves as cofactor.

It is found in the cytoplasm. The enzyme catalyses tRNA(Ile) + L-isoleucine + ATP = L-isoleucyl-tRNA(Ile) + AMP + diphosphate. Its function is as follows. Catalyzes the attachment of isoleucine to tRNA(Ile). As IleRS can inadvertently accommodate and process structurally similar amino acids such as valine, to avoid such errors it has two additional distinct tRNA(Ile)-dependent editing activities. One activity is designated as 'pretransfer' editing and involves the hydrolysis of activated Val-AMP. The other activity is designated 'posttransfer' editing and involves deacylation of mischarged Val-tRNA(Ile). This is Isoleucine--tRNA ligase from Burkholderia cenocepacia (strain ATCC BAA-245 / DSM 16553 / LMG 16656 / NCTC 13227 / J2315 / CF5610) (Burkholderia cepacia (strain J2315)).